The chain runs to 225 residues: Endonuclease V (225 aa).

Mg(2+)-binding residues include Asp-43 and Asp-110.

It belongs to the endonuclease V family. Requires Mg(2+) as cofactor.

The protein localises to the cytoplasm. The catalysed reaction is Endonucleolytic cleavage at apurinic or apyrimidinic sites to products with a 5'-phosphate.. DNA repair enzyme involved in the repair of deaminated bases. Selectively cleaves double-stranded DNA at the second phosphodiester bond 3' to a deoxyinosine leaving behind the intact lesion on the nicked DNA. The polypeptide is Endonuclease V (Thermotoga petrophila (strain ATCC BAA-488 / DSM 13995 / JCM 10881 / RKU-1)).